Here is a 1037-residue protein sequence, read N- to C-terminus: Serine/threonine-protein kinase ULK2 (1037 aa).

The region spanning 9–271 (YCKRDLVGHG…FEAFFSHPFL (263 aa)) is the Protein kinase domain. Residues 15–23 (VGHGAFAVV) and Lys39 contribute to the ATP site. Asp131 serves as the catalytic Proton acceptor. The disordered stretch occupies residues 319–350 (ENLSSPPLGPPNYLQVSKDSASNSSKNSSCDT). Residues 335 to 348 (SKDSASNSSKNSSC) are compositionally biased toward low complexity. Ser430 is subject to Phosphoserine. Disordered stretches follow at residues 452–480 (CSPV…PSPL), 494–515 (GHPQ…PQTQ), 540–594 (QKLR…KTPL), and 626–697 (HGPA…NTER). Polar residues-rich tracts occupy residues 506–515 (SSGSPVPQTQ) and 571–585 (LGTS…SPRN). Positions 632-643 (QSKDGNDPRECS) are enriched in basic and acidic residues. A compositionally biased stretch (polar residues) spans 658-678 (QQQSKAVFGRSVSTGKLSEQQ). Ser772 and Ser781 each carry phosphoserine. Positions 813-1037 (ELPEETLMER…SALCCSTATV (225 aa)) are CTD-like region.

This sequence belongs to the protein kinase superfamily. Ser/Thr protein kinase family. APG1/unc-51/ULK1 subfamily. As to quaternary structure, component of a complex consisting of ATG13/KIAA0652, ULK1 and RB1CC1/FIP200. Interacts (via C-terminus) with ATG13/KIAA0652. Associates with the mammalian target of rapamycin complex 1 (mTORC1) through an interaction with RPTOR. Interacts with SYNGAP1. Autophosphorylated. In response to nutrient limitation, probably phosphorylated and activated by AMPK, leading to activate autophagy. As to expression, widely expressed.

The protein localises to the cytoplasmic vesicle membrane. The enzyme catalyses L-seryl-[protein] + ATP = O-phospho-L-seryl-[protein] + ADP + H(+). It catalyses the reaction L-threonyl-[protein] + ATP = O-phospho-L-threonyl-[protein] + ADP + H(+). Its function is as follows. Serine/threonine-protein kinase involved in autophagy in response to starvation. Acts upstream of phosphatidylinositol 3-kinase PIK3C3 to regulate the formation of autophagophores, the precursors of autophagosomes. Part of regulatory feedback loops in autophagy: acts both as a downstream effector and a negative regulator of mammalian target of rapamycin complex 1 (mTORC1) via interaction with RPTOR. Activated via phosphorylation by AMPK, also acts as a negative regulator of AMPK through phosphorylation of the AMPK subunits PRKAA1, PRKAB2 and PRKAG1. May phosphorylate ATG13/KIAA0652, FRS2, FRS3 and RPTOR; however such data need additional evidences. Not involved in ammonia-induced autophagy or in autophagic response of cerebellar granule neurons (CGN) to low potassium concentration. Plays a role early in neuronal differentiation and is required for granule cell axon formation: may govern axon formation via Ras-like GTPase signaling and through regulation of the Rab5-mediated endocytic pathways within developing axons. This Mus musculus (Mouse) protein is Serine/threonine-protein kinase ULK2 (Ulk2).